The primary structure comprises 492 residues: Dipeptide and tripeptide permease A (492 aa).

Residues 1-20 (MSTANKHPEAASLNAFKQPR) are Cytoplasmic-facing. Residues 21 to 43 (SFYLIFSIELWERFGYYGLQGIM) form a helical membrane-spanning segment. The Periplasmic portion of the chain corresponds to 44–58 (AVYLVKMLGMSEAQS). Residues 59–79 (ITLFASFSALVYGLIAVGGWL) form a helical membrane-spanning segment. The Cytoplasmic portion of the chain corresponds to 80–88 (GDKVLGTKR). The helical transmembrane segment at 89-109 (VIVLGTLVLALGYALVAWSGH) threads the bilayer. Residue D110 is a topological domain, periplasmic. A helical membrane pass occupies residues 111 to 131 (IAMIYFGMATIAVGNGLFKAN). The Cytoplasmic portion of the chain corresponds to 132–152 (PSSLLSTCYEKDDPRLDGAFT). Residues 153–173 (MYYMAINIGSFFSMLATPWLA) traverse the membrane as a helical segment. Over 174–178 (AQFGW) the chain is Periplasmic. Residues 179-199 (STAFGLSFVGMLITLVNFMFF) form a helical membrane-spanning segment. Residues 200 to 217 (RKWVKDHGSKPDFAPLNM) lie on the Cytoplasmic side of the membrane. The chain crosses the membrane as a helical span at residues 218 to 238 (GKLLVTLLGIAVMIAAATWLL). The Periplasmic portion of the chain corresponds to 239 to 245 (HNQDIAR). A helical transmembrane segment spans residues 246–266 (MVLGAVAVAIVVIFTKEALTL). Over 267–273 (KGAARRK) the chain is Cytoplasmic. Residues 274–294 (MIVAFLLMLEAIVFFVLYMQM) form a helical membrane-spanning segment. Residues 295 to 319 (PTSLNFFAIRNVEHSLLGIAFQPEQ) are Periplasmic-facing. Residues 320–340 (FQALNPFWIMIFSPLLAALYN) form a helical membrane-spanning segment. The Cytoplasmic segment spans residues 341 to 351 (KLGDRMPMPHK). Residues 352-372 (FALGMVLCSAAFLVLPLGASL) traverse the membrane as a helical segment. Topologically, residues 373–377 (ANKMG) are periplasmic. The helical transmembrane segment at 378-398 (IVSVGWLVLSYALQSVGELMI) threads the bilayer. Residues 399–413 (SGLGLAMVAQLVPQR) lie on the Cytoplasmic side of the membrane. Residues 414–434 (LMGFIMGSWFLTTAGAAMVAG) traverse the membrane as a helical segment. Over 435–458 (KVANLMAVPENITNPLLSLHVYGD) the chain is Periplasmic. The helical transmembrane segment at 459-479 (IFFKIGITTGVIAVLMILAAP) threads the bilayer. The Cytoplasmic portion of the chain corresponds to 480-492 (LLNRMTQDEQPGV).

It belongs to the major facilitator superfamily. Proton-dependent oligopeptide transporter (POT/PTR) (TC 2.A.17) family. DtpA subfamily.

It localises to the cell inner membrane. Its function is as follows. Proton-dependent permease that transports di- and tripeptides. This chain is Dipeptide and tripeptide permease A, found in Erwinia pyrifoliae (strain DSM 12163 / CIP 106111 / Ep16/96).